The chain runs to 445 residues: UDP-N-acetylmuramoylalanine--D-glutamate ligase (445 aa).

Residue 117–123 (GSNGKTT) coordinates ATP.

This sequence belongs to the MurCDEF family.

It localises to the cytoplasm. It carries out the reaction UDP-N-acetyl-alpha-D-muramoyl-L-alanine + D-glutamate + ATP = UDP-N-acetyl-alpha-D-muramoyl-L-alanyl-D-glutamate + ADP + phosphate + H(+). Its pathway is cell wall biogenesis; peptidoglycan biosynthesis. Cell wall formation. Catalyzes the addition of glutamate to the nucleotide precursor UDP-N-acetylmuramoyl-L-alanine (UMA). In Neisseria meningitidis serogroup A / serotype 4A (strain DSM 15465 / Z2491), this protein is UDP-N-acetylmuramoylalanine--D-glutamate ligase.